The following is a 302-amino-acid chain: 4-hydroxy-tetrahydrodipicolinate synthase (302 aa).

A pyruvate-binding site is contributed by Thr57. Tyr145 acts as the Proton donor/acceptor in catalysis. The Schiff-base intermediate with substrate role is filled by Lys173. Ile213 provides a ligand contact to pyruvate.

This sequence belongs to the DapA family. As to quaternary structure, homotetramer; dimer of dimers.

The protein localises to the cytoplasm. The catalysed reaction is L-aspartate 4-semialdehyde + pyruvate = (2S,4S)-4-hydroxy-2,3,4,5-tetrahydrodipicolinate + H2O + H(+). It functions in the pathway amino-acid biosynthesis; L-lysine biosynthesis via DAP pathway; (S)-tetrahydrodipicolinate from L-aspartate: step 3/4. Its function is as follows. Catalyzes the condensation of (S)-aspartate-beta-semialdehyde [(S)-ASA] and pyruvate to 4-hydroxy-tetrahydrodipicolinate (HTPA). The polypeptide is 4-hydroxy-tetrahydrodipicolinate synthase (Corynebacterium aurimucosum (strain ATCC 700975 / DSM 44827 / CIP 107346 / CN-1) (Corynebacterium nigricans)).